We begin with the raw amino-acid sequence, 201 residues long: Ribonuclease HII (201 aa).

The 187-residue stretch at 15 to 201 (AIIAGVDEAG…FAPIKAYGAP (187 aa)) folds into the RNase H type-2 domain. A divalent metal cation is bound by residues Asp21, Glu22, and Asp113.

Belongs to the RNase HII family. It depends on Mn(2+) as a cofactor. Mg(2+) is required as a cofactor.

It is found in the cytoplasm. The catalysed reaction is Endonucleolytic cleavage to 5'-phosphomonoester.. Functionally, endonuclease that specifically degrades the RNA of RNA-DNA hybrids. The chain is Ribonuclease HII from Bordetella pertussis (strain Tohama I / ATCC BAA-589 / NCTC 13251).